The sequence spans 41 residues: Large ribosomal subunit protein bL36 (41 aa).

Belongs to the bacterial ribosomal protein bL36 family.

This chain is Large ribosomal subunit protein bL36, found in Rhodopseudomonas palustris (strain BisB5).